A 913-amino-acid polypeptide reads, in one-letter code: Transient receptor potential cation channel protein painless (913 aa).

Residues 1-490 (MDFNNCGFID…SSFLFLKWHR (490 aa)) lie on the Cytoplasmic side of the membrane. ANK repeat units lie at residues 154–189 (GEFT…DIDS), 260–289 (EYFG…DINS), and 368–397 (GRLV…YIGS). The chain crosses the membrane as a helical span at residues 491-511 (LSVIFYLNFLIYSLFTASIIT). Over 512-523 (YTLLKFHESDQR) the chain is Extracellular. The helical transmembrane segment at 524 to 544 (ALTAFFGLLSWLGISYLILRE) threads the bilayer. Residues 545 to 555 (CIQWIMSPVRY) are Cytoplasmic-facing. Residues 556 to 576 (FWSITNIMEVALITLSIFTCM) traverse the membrane as a helical segment. Topologically, residues 577–586 (ESSFDKETQR) are extracellular. Residues 587-607 (VLAVFTILLVSMEFCLLVGSL) form a helical membrane-spanning segment. Residues 608–628 (PVLSISTHMLMLREVSNSFLK) are Cytoplasmic-facing. Residues 629–649 (SFTLYSIFVLTFSLCFYILFG) form a helical membrane-spanning segment. Over 650–708 (KSVEEDQSKSATPCPPLGKKEGKDEEQGFNTFTKPIEAVIKTIVMLTGEFDAGSIQFTS) the chain is Extracellular. The tract at residues 656–675 (QSKSATPCPPLGKKEGKDEE) is disordered. The helical transmembrane segment at 709-729 (IYTYLIFLLFVIFMTIVLFNL) threads the bilayer. The Cytoplasmic portion of the chain corresponds to 730–913 (LNGLAVSDTQ…QLIQLVQDRK (184 aa)).

The protein belongs to the transient receptor (TC 1.A.4) family. In terms of tissue distribution, present in multidendritic neurons, chordotonal neurons, a subset of cells in the central nervous system and a subset of sensory neurons in the antennal-maxillary complex. Not detected in gonads and dorsal vessels (at protein level). Expressed in peripheral neurons that extend multiple branched dendrites beneath the larval epidermis, similar to vertebrate pain receptors.

It is found in the membrane. Its function is as follows. Receptor-activated non-selective cation channel involved in detection of pain sensation due to high temperature. Involved in heat nociception by being activated by noxious temperature of 38 degrees Celsius. The sequence is that of Transient receptor potential cation channel protein painless (pain) from Drosophila melanogaster (Fruit fly).